Here is a 292-residue protein sequence, read N- to C-terminus: Phosphatidylglycerol--prolipoprotein diacylglyceryl transferase (292 aa).

The next 7 membrane-spanning stretches (helical) occupy residues 25–45 (ITLH…WWYA), 70–90 (FVVW…VLVW), 102–122 (IIAV…IIIA), 138–158 (FDII…CNFI), 193–213 (FMEG…FKAF), 217–237 (GTVS…SEVY), and 255–275 (GFTY…YLLL). R153 lines the a 1,2-diacyl-sn-glycero-3-phospho-(1'-sn-glycerol) pocket.

Belongs to the Lgt family.

Its subcellular location is the cell inner membrane. The catalysed reaction is L-cysteinyl-[prolipoprotein] + a 1,2-diacyl-sn-glycero-3-phospho-(1'-sn-glycerol) = an S-1,2-diacyl-sn-glyceryl-L-cysteinyl-[prolipoprotein] + sn-glycerol 1-phosphate + H(+). It functions in the pathway protein modification; lipoprotein biosynthesis (diacylglyceryl transfer). Catalyzes the transfer of the diacylglyceryl group from phosphatidylglycerol to the sulfhydryl group of the N-terminal cysteine of a prolipoprotein, the first step in the formation of mature lipoproteins. In Bartonella tribocorum (strain CIP 105476 / IBS 506), this protein is Phosphatidylglycerol--prolipoprotein diacylglyceryl transferase.